Reading from the N-terminus, the 1399-residue chain is MKDLLNLLKNQGQIEEFDAIRIGLASPEMIRSWSFGEVKKPETINYRTFKPERDGLFCAKIFGPVKDYECLCGKYKRLKHRGVICEKCGVEVALAKVRRERMGHIELASPVAHIWFLKSLPSRIGLLLDMTLRDIERVLYFESYVVIDPGMTTLEKGQLLNDEQYFEALEEFGDDFDARMGAEAVHELLNAIDLEHEIGRLREEIPQTNSETKIKKLSKRLKLMEAFQGSGNKPEWMVLTVLPVLPPDLRPLVPLDGGRFATSDLNDLYRRVINRNNRLKRLLDLAAPDIIVRNEKRMLQEAVDALLDNGRRGRAITGSNKRPLKSLADMIKGKQGRFRQNLLGKRVDYSGRSVITVGPTLRLHQCGLPKKMALELFKPFIFGKLEGRGMATTIKAAKKMVERELPEVWDVLAEVIREHPVLLNRAPTLHRLGIQAFEPVLIEGKAIQLHPLVCAAYNADFDGDQMAVHVPLTLEAQLEARALMMSTNNILSPANGEPIIVPSQDVVMGLYYMTREAINAKGEGMAFADLQEVDRAYRSGQASLHARVKVRINEKIKGEDGQLTANTRIVDTTVGRALLFQVVPAGLPFDVVNQSMKKKAISKLINHCYRVVGLKDTVIFADQLMYTGFAYSTISGVSIGVNDFVIPDEKARIINAATDEVKEIESQYASGLVTQGEKYNKVIDLWSKANDEVSKAMMANLSKEKVVDREGKEVDQESFNSMYMMADSGARGSAAQIRQLAGMRGLMAKPDGSIIETPITANFREGLNVLQYFISTHGARKGLADTALKTANSGYLTRRLVDVAQDLVVTEIDCGTEHGLLMSPHIEGGDVVEPLGERVLGRVIARDVFKPGSDEVIVPAGTLIDEKWVDFLEVMSVDEVVVRSPITCETRHGICAMCYGRDLARGHRVNIGEAVGVIAAQSIGEPGTQLTMRTFHIGGAASRTSAADNVQVKNGGTIRLHNLKHVVRADGALVAVSRSGELAVADDFGRERERYKLPYGAVISVKEGDKVDPGAIVAKWDPHTHPIVTEVDGTVAFVGMEEGITVKRQTDELTGLTNIEVMDPKDRPAAGKDIRPAVKLIDAAGKDLLLPGTDVPAQYFLPANALVNLTDGAKVSIGDVVARIPQETSKTRDITGGLPRVADLFEARRPKEPSILAEISGTISFGKETKGKRRLVITPNDGSDPYEELIPKWRHLNVFEGEQVNRGEVISDGPSNPHDILRLLGVSSLAKYIVNEIQDVYRLQGVKINDKHIETILRQMLRKVEVSESGDSSFIKGDQVELTQVLEENEQLGTEDKFPAKYERVLLGITKASLSTESFISAASFQETTRVLTEAAVTGKRDFLRGLKENVVVGRLIPAGTGLAYHSERKRQRDLGKPQRVSASEAEAALTEALNSSGN.

Residues Cys-70, Cys-72, Cys-85, and Cys-88 each contribute to the Zn(2+) site. Asp-460, Asp-462, and Asp-464 together coordinate Mg(2+). Residues Cys-814, Cys-888, Cys-895, and Cys-898 each coordinate Zn(2+). A disordered region spans residues 1367–1399 (SERKRQRDLGKPQRVSASEAEAALTEALNSSGN). Positions 1382 to 1399 (SASEAEAALTEALNSSGN) are enriched in low complexity.

It belongs to the RNA polymerase beta' chain family. As to quaternary structure, the RNAP catalytic core consists of 2 alpha, 1 beta, 1 beta' and 1 omega subunit. When a sigma factor is associated with the core the holoenzyme is formed, which can initiate transcription. Requires Mg(2+) as cofactor. Zn(2+) serves as cofactor.

The catalysed reaction is RNA(n) + a ribonucleoside 5'-triphosphate = RNA(n+1) + diphosphate. DNA-dependent RNA polymerase catalyzes the transcription of DNA into RNA using the four ribonucleoside triphosphates as substrates. The polypeptide is DNA-directed RNA polymerase subunit beta' (Pseudomonas aeruginosa (strain UCBPP-PA14)).